We begin with the raw amino-acid sequence, 328 residues long: GMP reductase (328 aa).

Catalysis depends on cysteine 176, which acts as the Thioimidate intermediate. 205–228 (IIADGGIRTHGDIAKSIRFGASMI) contacts NADP(+).

Belongs to the IMPDH/GMPR family. GuaC type 2 subfamily.

It carries out the reaction IMP + NH4(+) + NADP(+) = GMP + NADPH + 2 H(+). Functionally, catalyzes the irreversible NADPH-dependent deamination of GMP to IMP. It functions in the conversion of nucleobase, nucleoside and nucleotide derivatives of G to A nucleotides, and in maintaining the intracellular balance of A and G nucleotides. This Streptococcus pneumoniae (strain JJA) protein is GMP reductase.